The primary structure comprises 1345 residues: Rho guanine nucleotide exchange factor 10 (1345 aa).

2 disordered regions span residues 1-84 (MEQG…PAKL) and 99-120 (TPLQ…GVGL). Over residues 22–39 (NNEEEGELFDFDSGDEVP) the composition is skewed to acidic residues. A compositionally biased stretch (basic and acidic residues) spans 40-54 (EADRQVPSADDRTRG). Residues 102 to 111 (QEDQPSSPDA) show a composition bias toward polar residues. Ser157 bears the Phosphoserine mark. 2 disordered regions span residues 158-195 (VEEE…SALA) and 207-273 (MENP…IPRS). The segment covering 171–191 (QCNSLSSEDLPHSSEQGSQEG) has biased composition (polar residues). The segment covering 224–239 (DSEPDEMIYDDVENGE) has biased composition (acidic residues). Residues 242 to 255 (GNSSPEYGWSSSEF) are compositionally biased toward low complexity. The stretch at 307–335 (GAMEIQQAKQRQERKMQKLMKAAKEGTKD) forms a coiled coil. Residue Ser355 is modified to Phosphoserine. Positions 397-584 (VRRYILGSIV…ETLAEKLNER (188 aa)) constitute a DH domain. Disordered regions lie at residues 1202-1237 (DRAR…QPDT) and 1253-1306 (KNDL…RASS). Low complexity predominate over residues 1256-1271 (LSSSSGSLNLSHGSSS). A Phosphoserine modification is found at Ser1262. An N5-methylglutamine modification is found at Gln1314.

Methylated at Gln-1314 by N6AMT1. Ubiquitously expressed.

In terms of biological role, may play a role in developmental myelination of peripheral nerves. This is Rho guanine nucleotide exchange factor 10 (Arhgef10) from Mus musculus (Mouse).